A 962-amino-acid polypeptide reads, in one-letter code: Leucine--tRNA ligase (962 aa).

The 'HIGH' region signature appears at 40 to 51 (PYPSGAGLHVGH). The disordered stretch occupies residues 548 to 570 (SRKLSGQHDEPNSNVTPSAVEGS). A 'KMSKS' region motif is present at residues 737 to 741 (KMSKS). Position 740 (Lys740) interacts with ATP.

This sequence belongs to the class-I aminoacyl-tRNA synthetase family.

Its subcellular location is the cytoplasm. The catalysed reaction is tRNA(Leu) + L-leucine + ATP = L-leucyl-tRNA(Leu) + AMP + diphosphate. This is Leucine--tRNA ligase from Christiangramia forsetii (strain DSM 17595 / CGMCC 1.15422 / KT0803) (Gramella forsetii).